The sequence spans 522 residues: MLDNKFGFKQRVASLRWLSAAIMLSVSAVPAWAFSIDDVAQQAEKLAQKGFEAPKSNLPAQFRDMKFADYQQIRFNNDKSYWNNVQTPFKLQFYHQGMYFDTPVKINEVTATTVDEIKYAPEFFDFGPVNHDPESVKNLGFAGFKVLYPINKADKNDEIVSMLGASYFRVVGKGQIYGLSARGLAIDTALPSGEEFPRFREFWIERPKPNDKHLVIYALLDSPRAAGAYRFTVYPGRDSVVDVQAKVFLRDKVGKLGIAPLTSMYLFGPNQPSPTLNYRPALNDSNGLSIHAGNGEWIWRPLNNPKHLSVSTYAVENPKGFGLLQRGRDFTSYEDLDDRYDLRPSGWIEPKGEWGKGKVELVEIPTADETNDNIVAFWTPDVLPETGKPLDVKYRLHFTRDEDQLHSPNIAYVQQTRRSAGDVKQSNLIRQPDGTIAYIVDFIGPNLKELDENAPVASQVSIGDNGEIVENNVRYNPVTHGWRLTLRVRVKDAKQPTEMRAALVNGETTLTETWSNQLPANE.

An N-terminal signal peptide occupies residues M1 to A33.

The protein belongs to the OpgD/OpgG family.

It localises to the periplasm. The protein operates within glycan metabolism; osmoregulated periplasmic glucan (OPG) biosynthesis. Its function is as follows. Involved in the biosynthesis of osmoregulated periplasmic glucans (OPGs). The sequence is that of Glucans biosynthesis protein G from Pectobacterium atrosepticum (strain SCRI 1043 / ATCC BAA-672) (Erwinia carotovora subsp. atroseptica).